A 509-amino-acid polypeptide reads, in one-letter code: BPI fold-containing family C protein (509 aa).

An N-terminal signal peptide occupies residues 1-23; it reads MRTKQVPVLWACFLLWSLYIASS. Asn63, Asn79, Asn92, Asn113, and Asn117 each carry an N-linked (GlcNAc...) asparagine glycan. Cys161 and Cys202 are oxidised to a cystine. N-linked (GlcNAc...) asparagine glycans are attached at residues Asn215, Asn227, Asn357, Asn374, and Asn457.

The protein belongs to the BPI/LBP/Plunc superfamily. BPI/LBP family.

The protein localises to the secreted. This Mus musculus (Mouse) protein is BPI fold-containing family C protein (Bpifc).